A 1079-amino-acid polypeptide reads, in one-letter code: Spermatogenesis-associated protein 31G1 (1079 aa).

Disordered regions lie at residues 97-145, 261-281, 297-317, 331-362, 376-412, 506-566, 637-678, and 840-975; these read EVEE…GSEG, EDLE…SPSV, GVLS…LEVL, KMPQ…EGGL, EKPQ…RYKP, NLWA…SPPP, VPVF…EQRK, and PHSS…NHPA. A compositionally biased stretch (acidic residues) spans 98 to 113; that stretch reads VEEEGEEEEEGEDEAS. A compositionally biased stretch (pro residues) spans 336 to 345; sequence FEPPMPPPCQ. Residues 398-412 show a composition bias toward basic and acidic residues; the sequence is LQRESSLEDPSRYKP. 2 stretches are compositionally biased toward low complexity: residues 551–562 and 645–655; these read NSSASRSPSLAL and SSPSSNSVSKS. Basic and acidic residues predominate over residues 669–678; that stretch reads PDGEAVEQRK. Basic residues predominate over residues 942–951; sequence AKKREHPRKP.

In terms of biological role, dispensable for normal development and fertility. The protein is Spermatogenesis-associated protein 31G1 of Homo sapiens (Human).